Here is a 621-residue protein sequence, read N- to C-terminus: Phosphoenolpyruvate carboxykinase [GTP] (621 aa).

Substrate-binding positions include Arg-83 and 217 to 219 (YGG). Lys-226 and His-245 together coordinate Mn(2+). Ser-267 contributes to the substrate binding site. A GTP-binding site is contributed by 268-273 (MCGKTS). The active site involves Cys-269. Asp-286 is a binding site for Mn(2+). 381 to 383 (NAR) lines the substrate pocket. Positions 383 and 415 each coordinate GTP.

It belongs to the phosphoenolpyruvate carboxykinase [GTP] family. The cofactor is Mn(2+).

The protein localises to the cytoplasm. The catalysed reaction is oxaloacetate + GTP = phosphoenolpyruvate + GDP + CO2. It functions in the pathway carbohydrate biosynthesis; gluconeogenesis. Functionally, catalyzes the conversion of oxaloacetate (OAA) to phosphoenolpyruvate (PEP), the rate-limiting step in the metabolic pathway that produces glucose from lactate and other precursors derived from the citric acid cycle. The sequence is that of Phosphoenolpyruvate carboxykinase [GTP] from Pyrococcus horikoshii (strain ATCC 700860 / DSM 12428 / JCM 9974 / NBRC 100139 / OT-3).